Consider the following 192-residue polypeptide: Protein MTH_857 (192 aa).

Positions 9–192 constitute an AMMECR1 domain; it reads DEGRTLVKIA…FQAQIFHEDG (184 aa).

The chain is Protein MTH_857 from Methanothermobacter thermautotrophicus (strain ATCC 29096 / DSM 1053 / JCM 10044 / NBRC 100330 / Delta H) (Methanobacterium thermoautotrophicum).